The following is a 342-amino-acid chain: MKIIVFGAGAWGTAMALSAAAHPAGHAVTLWARDGRQADAMQAARQNARYLPGIAFPAALALASGAPSGALASCRADLAIVATPMSGLRGMLEELRDATIPVAWLCKGFEAVPAGGETAAQGLMAHEICSQVAPRLRAGALSGPSFALEAAQGRPTALVAASRDAHVRELLVEAFHGPTLRVYANEDIVGVEVGGAVKNVLAIATGLCDGLDLGTNARAALITRGLAEMSRLGLALGARAETFMGLSGLGDLVLTATGDLSRNRRVGLALARGLTLDQAVESLGHVAEGVYSARTVVRRAGQLGVDMPIAREVVALLDGRSTASDAVARLMGRSPAAELRSC.

Residues tryptophan 11, arginine 33, and lysine 107 each coordinate NADPH. Sn-glycerol 3-phosphate contacts are provided by lysine 107, glycine 143, and serine 145. Position 147 (alanine 147) interacts with NADPH. 5 residues coordinate sn-glycerol 3-phosphate: lysine 198, aspartate 251, serine 261, arginine 262, and asparagine 263. Residue lysine 198 is the Proton acceptor of the active site. NADPH is bound at residue arginine 262. NADPH-binding residues include valine 286 and glutamate 288.

Belongs to the NAD-dependent glycerol-3-phosphate dehydrogenase family.

The protein resides in the cytoplasm. It catalyses the reaction sn-glycerol 3-phosphate + NAD(+) = dihydroxyacetone phosphate + NADH + H(+). The catalysed reaction is sn-glycerol 3-phosphate + NADP(+) = dihydroxyacetone phosphate + NADPH + H(+). It functions in the pathway membrane lipid metabolism; glycerophospholipid metabolism. Catalyzes the reduction of the glycolytic intermediate dihydroxyacetone phosphate (DHAP) to sn-glycerol 3-phosphate (G3P), the key precursor for phospholipid synthesis. The sequence is that of Glycerol-3-phosphate dehydrogenase [NAD(P)+] from Paracidovorax citrulli (strain AAC00-1) (Acidovorax citrulli).